The primary structure comprises 450 residues: 3-phosphoshikimate 1-carboxyvinyltransferase (450 aa).

3-phosphoshikimate-binding residues include K28, S29, and R33. A phosphoenolpyruvate-binding site is contributed by K28. 2 residues coordinate phosphoenolpyruvate: G100 and R128. The 3-phosphoshikimate site is built by S173, Q175, D326, and K353. Q175 contributes to the phosphoenolpyruvate binding site. The Proton acceptor role is filled by D326. Residues R357 and R402 each contribute to the phosphoenolpyruvate site.

Belongs to the EPSP synthase family. Monomer.

The protein resides in the cytoplasm. It catalyses the reaction 3-phosphoshikimate + phosphoenolpyruvate = 5-O-(1-carboxyvinyl)-3-phosphoshikimate + phosphate. Its pathway is metabolic intermediate biosynthesis; chorismate biosynthesis; chorismate from D-erythrose 4-phosphate and phosphoenolpyruvate: step 6/7. Its function is as follows. Catalyzes the transfer of the enolpyruvyl moiety of phosphoenolpyruvate (PEP) to the 5-hydroxyl of shikimate-3-phosphate (S3P) to produce enolpyruvyl shikimate-3-phosphate and inorganic phosphate. The chain is 3-phosphoshikimate 1-carboxyvinyltransferase from Brucella abortus (strain S19).